We begin with the raw amino-acid sequence, 198 residues long: Recombination protein RecR (198 aa).

The C4-type zinc-finger motif lies at 56-71 (CGVCGNVDTSNPCGIC). The 96-residue stretch at 79-174 (RSICVVEEVA…RVTQLAHGLP (96 aa)) folds into the Toprim domain.

The protein belongs to the RecR family.

May play a role in DNA repair. It seems to be involved in an RecBC-independent recombinational process of DNA repair. It may act with RecF and RecO. The chain is Recombination protein RecR from Novosphingobium aromaticivorans (strain ATCC 700278 / DSM 12444 / CCUG 56034 / CIP 105152 / NBRC 16084 / F199).